A 661-amino-acid chain; its full sequence is 3-hydroxypropionyl-coenzyme A synthetase (661 aa).

D526 is an active-site residue. Residue K617 is modified to N6-acetyllysine.

The protein belongs to the ATP-dependent AMP-binding enzyme family. In terms of assembly, homotetramer.

It catalyses the reaction 3-hydroxypropanoate + ATP + CoA = 3-hydroxypropanoyl-CoA + AMP + diphosphate. Functionally, plays a role in the autotrophic CO(2) fixation pathway. Activates 3-hydroxypropionate to its CoA ester. Can also activate propionate, and to a lesser extent acrylate, acetate and butyrate. This is 3-hydroxypropionyl-coenzyme A synthetase from Metallosphaera sedula (strain ATCC 51363 / DSM 5348 / JCM 9185 / NBRC 15509 / TH2).